A 150-amino-acid chain; its full sequence is Group IIC secretory phospholipase A2 (150 aa).

The signal sequence occupies residues 1-20 (MKGIAIFLVFIFYWTTSTLS). 8 cysteine pairs are disulfide-bonded: cysteine 46/cysteine 143, cysteine 48/cysteine 64, cysteine 63/cysteine 121, cysteine 69/cysteine 150, cysteine 70/cysteine 114, cysteine 79/cysteine 107, cysteine 97/cysteine 112, and cysteine 99/cysteine 105. Ca(2+) is bound by residues tyrosine 47, glycine 49, and glycine 51. Residue histidine 67 is part of the active site. Position 68 (aspartate 68) interacts with Ca(2+). Residue asparagine 92 is glycosylated (N-linked (GlcNAc...) asparagine). Aspartate 115 is a catalytic residue.

This sequence belongs to the phospholipase A2 family. Requires Ca(2+) as cofactor. As to expression, testis specific.

It localises to the secreted. It carries out the reaction a 1,2-diacyl-sn-glycero-3-phosphocholine + H2O = a 1-acyl-sn-glycero-3-phosphocholine + a fatty acid + H(+). Its function is as follows. PA2 catalyzes the calcium-dependent hydrolysis of the 2-acyl groups in 3-sn-phosphoglycerides. Testis PA2 may be important in the production of prostaglandins, by the release of arachidonic acid, which in turn are necessary for the contractions of the seminiferous tubules and the testicular capsule; they also seem to decrease sperm transit time through the male reproductive tract. In Mus musculus (Mouse), this protein is Group IIC secretory phospholipase A2 (Pla2g2c).